Consider the following 818-residue polypeptide: Dipeptidyl aminopeptidase B (818 aa).

The Cytoplasmic segment spans residues 1-29 (MEGGEEEVERIPDELFDTKKKHLLDKLIR). Residues 30-45 (VGIILVLLIWGTVLLL) traverse the membrane as a helical; Signal-anchor for type II membrane protein segment. The Lumenal segment spans residues 46 to 818 (KSIPHHSNTP…KRAFDGQFVK (773 aa)). N-linked (GlcNAc...) asparagine glycans are attached at residues N63, N79, N110, N139, N372, N392, and N421. S679 functions as the Charge relay system in the catalytic mechanism. Residue N738 is glycosylated (N-linked (GlcNAc...) asparagine). Active-site charge relay system residues include D756 and H789.

Belongs to the peptidase S9B family.

The protein resides in the vacuole membrane. This is Dipeptidyl aminopeptidase B (DAP2) from Saccharomyces cerevisiae (strain ATCC 204508 / S288c) (Baker's yeast).